The following is an 892-amino-acid chain: DNA mismatch repair protein MutS (892 aa).

634 to 641 (GPNMGGKS) contacts ATP.

Belongs to the DNA mismatch repair MutS family.

In terms of biological role, this protein is involved in the repair of mismatches in DNA. It is possible that it carries out the mismatch recognition step. This protein has a weak ATPase activity. The sequence is that of DNA mismatch repair protein MutS from Paraburkholderia phymatum (strain DSM 17167 / CIP 108236 / LMG 21445 / STM815) (Burkholderia phymatum).